The following is a 996-amino-acid chain: Receptor-like protein kinase HSL1 (996 aa).

An N-terminal signal peptide occupies residues 1 to 15 (MYLLFLFLLFPTVFS). At 16–618 (LNQDGFILQQ…ENEAKKRGYV (603 aa)) the chain is on the extracellular side. LRR repeat units lie at residues 59 to 83 (FSSVTSVDLSSANLAGPFPSVICRL), 84 to 107 (SNLAHLSLYNNSINSTLPLNIAAC), 109 to 131 (SLQTLDLSQNLLTGELPQTLADI), 133 to 154 (TLVHLDLTGNNFSGDIPASFGK), 155 to 178 (FENLEVLSLVYNLLDGTIPPFLGN), 179 to 203 (ISTLKMLNLSYNPFSPSRIPPEFGN), 205 to 228 (TNLEVMWLTECHLVGQIPDSLGQL), 229 to 252 (SKLVDLDLALNDLVGHIPPSLGGL), 253 to 276 (TNVVQIELYNNSLTGEIPPELGNL), 278 to 299 (SLRLLDASMNQLTGKIPDELCR), 300 to 323 (VPLESLNLYENNLEGELPASIALS), 325 to 347 (NLYEIRIFGNRLTGGLPKDLGLN), 348 to 371 (SPLRWLDVSENEFSGDLPADLCAK), 373 to 395 (ELEELLIIHNSFSGVIPESLADC), 396 to 419 (RSLTRIRLAYNRFSGSVPTGFWGL), 421 to 443 (HVNLLELVNNSFSGEISKSIGGA), 444 to 467 (SNLSLLILSNNEFTGSLPEEIGSL), 468 to 491 (DNLNQLSASGNKFSGSLPDSLMSL), 493 to 515 (ELGTLDLHGNQFSGELTSGIKSW), 516 to 539 (KKLNELNLADNEFTGKIPDEIGSL), 541 to 562 (VLNYLDLSGNMFSGKIPVSLQS), and 563 to 586 (LKLNQLNLSYNRLSGDLPPSLAKD). N-linked (GlcNAc...) asparagine glycosylation is found at Asn93 and Asn97. Residues Asn143, Asn178, Asn186, and Asn203 are each glycosylated (N-linked (GlcNAc...) asparagine). Asn262 carries an N-linked (GlcNAc...) asparagine glycan. Asn429 and Asn445 each carry an N-linked (GlcNAc...) asparagine glycan. Asn569 carries N-linked (GlcNAc...) asparagine glycosylation. A helical membrane pass occupies residues 619-639 (WLLRSIFVLAAMVLLAGVAWF). Topologically, residues 640-996 (YFKYRTFKKA…EDTSDQGSIA (357 aa)) are cytoplasmic. In terms of domain architecture, Protein kinase spans 676-962 (LDEDNVIGAG…RRVVKMLQEI (287 aa)). Residues 682–690 (IGAGASGKV) and Lys704 each bind ATP. Tyr764 and Tyr802 each carry phosphotyrosine. Residue Asp815 is the Proton acceptor of the active site. Position 851 is a phosphoserine (Ser851). A phosphotyrosine mark is found at Tyr859 and Tyr866. Phosphothreonine is present on Thr867. The tract at residues 967 to 996 (EDSLHKIRDDKDGKLTPYYNEDTSDQGSIA) is disordered. The span at 968 to 980 (DSLHKIRDDKDGK) shows a compositional bias: basic and acidic residues.

Belongs to the protein kinase superfamily. Ser/Thr protein kinase family.

It is found in the cell membrane. The catalysed reaction is L-seryl-[protein] + ATP = O-phospho-L-seryl-[protein] + ADP + H(+). The enzyme catalyses L-threonyl-[protein] + ATP = O-phospho-L-threonyl-[protein] + ADP + H(+). The sequence is that of Receptor-like protein kinase HSL1 (HSL1) from Arabidopsis thaliana (Mouse-ear cress).